We begin with the raw amino-acid sequence, 719 residues long: Leucine-rich repeat and fibronectin type-III domain-containing protein 5 (719 aa).

An N-terminal signal peptide occupies residues 1 to 17 (MEKFLFYLFLIGIAVRA). The LRRNT domain occupies 18 to 51 (QICPKRCVCQILSPNLATLCAKKGLLFVPPNIDR). At 18 to 529 (QICPKRCVCQ…MQSQFLGGTM (512 aa)) the chain is on the extracellular side. 7 LRR repeats span residues 52–73 (RTVELRLADNFVTNIKRKDFAN), 76–97 (SLVDLTLSRNTISFITPHAFAD), 100–121 (NLRALHLNSNRLTKITNDMFSG), 124–145 (NLHHLILNNNQLTLISSTAFDD), 148–169 (ALEELDLSYNNLETIPWDAVEK), 172–193 (SLHTLSLDHNMIDNIPKGTFSH), and 196–217 (KMTRLDVTSNKLQKLPPDPLFQ). Asparagine 73 is a glycosylation site (N-linked (GlcNAc...) asparagine). The 47-residue stretch at 240–286 (NPLHCNCELLWLRRLSREDDLETCASPALLTGRYFWSIPEEEFLCEP) folds into the LRRCT domain. The 87-residue stretch at 287–373 (PLITRHTHEM…GEATQTVDLH (87 aa)) folds into the Ig-like domain. A disulfide bridge connects residues cysteine 308 and cysteine 357. Asparagine 330, asparagine 339, asparagine 382, asparagine 406, and asparagine 452 each carry an N-linked (GlcNAc...) asparagine glycan. Positions 385–416 (NHIHEPDPGSSDISTSTKSGSNASSSNGDTKM) are disordered. Over residues 393–412 (GSSDISTSTKSGSNASSSNG) the composition is skewed to low complexity. The region spanning 414-503 (TKMSQDKIVV…ITSLTATRVV (90 aa)) is the Fibronectin type-III domain. Residues 530-550 (IIIIGGIIVASVLVFIIILMI) traverse the membrane as a helical segment. Residues 551 to 719 (RYKVCNNNGQ…VQETQRLESI (169 aa)) lie on the Cytoplasmic side of the membrane. Residues 614-627 (SETCSSQDSSTTTS) show a composition bias toward low complexity. A disordered region spans residues 614 to 719 (SETCSSQDSS…VQETQRLESI (106 aa)). Polar residues-rich tracts occupy residues 628 to 641 (ALPPTWTSSAPVSQ), 654 to 677 (EPQSEAVTNVESQNTNRNNSTALQ), and 702 to 713 (LLTNVDQNVQET).

Belongs to the LRFN family. As to quaternary structure, can form heteromeric complexes with LRFN1, LRFN2, LRFN3 and LFRN4. Able to form homomeric complexes across cell junctions, between adjacent cells. Does not interact with DLG1, DLG2 or DLG3. Does not interact with DLG4. Post-translationally, glycosylated. As to expression, predominantly expressed in the brain, with a weak, but broad expression in the cerebral cortex and diencephalic nuclei. Strongly expressed in both the pyramidal layer and the dentate gyrus of the hippocampus. Also detected in other parts of the central nervous system, including the olfactory bulb, pons, cerebellum, and medulla oblongata, as well as in the peripheral nervous system, such as the ganglia of cranial nerves and the dorsal root ganglion during gestation.

It is found in the membrane. Its function is as follows. Cell adhesion molecule that mediates homophilic cell-cell adhesion in a Ca(2+)-independent manner. Promotes neurite outgrowth in hippocampal neurons. This is Leucine-rich repeat and fibronectin type-III domain-containing protein 5 (Lrfn5) from Mus musculus (Mouse).